We begin with the raw amino-acid sequence, 193 residues long: Rho-related GTP-binding protein RhoA-A (193 aa).

Residues 12–19 (GDGACGKT), 30–37 (FPEVYVPT), 59–63 (DTAGQ), 117–120 (NKKD), and 160–162 (SAK) each bind GTP. A glycan ((Microbial infection) O-linked (GlcNAc) tyrosine; by Yersinia Afp18) is linked at Y34. C190 bears the Cysteine methyl ester mark. C190 carries S-geranylgeranyl cysteine lipidation. Positions 191-193 (ALL) are cleaved as a propeptide — removed in mature form.

The protein belongs to the small GTPase superfamily. Rho family. In terms of processing, (Microbial infection) Glycosylated at Tyr-34 by Yersinia ruckeri toxin Afp18. Mono-O-GlcNAcylation by Afp18 inhibits RhoA activation by guanine nucleotide exchange factors and blocks RhoA signaling.

It is found in the cell membrane. Its function is as follows. Regulates a signal transduction pathway linking plasma membrane receptors to the assembly of focal adhesions and actin stress fibers. This is Rho-related GTP-binding protein RhoA-A from Danio rerio (Zebrafish).